The primary structure comprises 249 residues: Mannose-binding protein A (249 aa).

The N-terminal stretch at 1–20 (MLLFSSLPVLLLCVVTASYS) is a signal peptide. The interval 41–102 (VTNGTPGRDG…KGDPGDTSGV (62 aa)) is disordered. The segment covering 48 to 60 (RDGRDGPKGEKGE) has biased composition (basic and acidic residues). Proline 54 carries the post-translational modification 4-hydroxyproline. 2 positions are modified to 5-hydroxylysine: lysine 55 and lysine 58. Lysine 55 and lysine 58 each carry an O-linked (Gal...) hydroxylysine glycan. 4-hydroxyproline occurs at positions 61, 72, 78, and 89. A Collagen-like domain is found at 64–98 (GFRGSQGPPGKMGPPGNIGETGPLGPKGQKGDPGD). 5-hydroxylysine is present on residues lysine 90 and lysine 93. O-linked (Gal...) hydroxylysine glycosylation is found at lysine 90 and lysine 93. A C-type lectin domain is found at 135-246 (SRKKLYVTNG…CSSSFLAVCE (112 aa)). 2 disulfide bridges follow: cysteine 156-cysteine 245 and cysteine 223-cysteine 237. The Ca(2+) site is built by aspartate 189, glutamate 193, glutamate 213, asparagine 215, aspartate 216, glutamate 221, aspartate 222, asparagine 233, and aspartate 234. Positions 213-221 (EPNDHGSGE) are calcium-dependent carbohydrate binding.

As to quaternary structure, interacts with MASP1 and MASP2. Forms oligomeric complexes of 3, 4, 5 or, predominantly, 6 homotrimers. The homotrimers appear as globular heads that are connected to a central hub by thin stalks. In terms of processing, hydroxylated on lysine and proline residues within the collagen-like domain. O-glycosylated. O-linked glycans on hydroxylysine residues consist of Glc-Gal disaccharides bound to the oxygen atom of post-translationally added hydroxyl groups. Detected in blood serum (at protein level). Expressed in liver. Weakly expressed in lung, testis and brain. Not detected in bone marrow and heart.

The protein localises to the secreted. In terms of biological role, calcium-dependent lectin. Plays a role in the innate immune response by binding mannose, fucose and N-acetylglucosamine on bacteria, including strains of A.suis, H.parasuis and A.pleuropneumoniae, and activates the lectin complement pathway. According to some authors, it only binds mannose. This Sus scrofa (Pig) protein is Mannose-binding protein A.